Here is a 454-residue protein sequence, read N- to C-terminus: Asparagine--tRNA ligase (454 aa).

It belongs to the class-II aminoacyl-tRNA synthetase family. Homodimer.

It is found in the cytoplasm. It carries out the reaction tRNA(Asn) + L-asparagine + ATP = L-asparaginyl-tRNA(Asn) + AMP + diphosphate + H(+). The sequence is that of Asparagine--tRNA ligase from Ureaplasma urealyticum serovar 10 (strain ATCC 33699 / Western).